Consider the following 117-residue polypeptide: 5-hydroxyisourate hydrolase (117 aa).

Substrate contacts are provided by H7, R45, and Y114.

This sequence belongs to the transthyretin family. 5-hydroxyisourate hydrolase subfamily. As to quaternary structure, homotetramer.

The enzyme catalyses 5-hydroxyisourate + H2O = 5-hydroxy-2-oxo-4-ureido-2,5-dihydro-1H-imidazole-5-carboxylate + H(+). Its function is as follows. Catalyzes the hydrolysis of 5-hydroxyisourate (HIU) to 2-oxo-4-hydroxy-4-carboxy-5-ureidoimidazoline (OHCU). The chain is 5-hydroxyisourate hydrolase from Ralstonia nicotianae (strain ATCC BAA-1114 / GMI1000) (Ralstonia solanacearum).